A 1568-amino-acid polypeptide reads, in one-letter code: Plexin-C1 (1568 aa).

Positions Met-1–Gly-34 are cleaved as a signal peptide. The Sema domain maps to Ala-35 to Val-452. Residues Ala-35–Thr-944 are Extracellular-facing. Cys-64 and Cys-87 are oxidised to a cystine. N-linked (GlcNAc...) asparagine glycosylation is found at Asn-86, Asn-141, and Asn-149. 3 disulfide bridges follow: Cys-156–Cys-194, Cys-226–Cys-354, and Cys-283–Cys-329. N-linked (GlcNAc...) asparagine glycosylation is found at Asn-241 and Asn-252. Residues Asn-386 and Asn-407 are each glycosylated (N-linked (GlcNAc...) asparagine). 4 disulfide bridges follow: Cys-455–Cys-472, Cys-461–Cys-506, Cys-464–Cys-481, and Cys-475–Cys-487. 9 N-linked (GlcNAc...) asparagine glycosylation sites follow: Asn-548, Asn-582, Asn-653, Asn-692, Asn-771, Asn-796, Asn-821, Asn-871, and Asn-890. A helical membrane pass occupies residues Trp-945 to Val-965. The Cytoplasmic portion of the chain corresponds to Thr-966–Met-1568. Ser-978 bears the Phosphoserine mark.

The protein belongs to the plexin family. As to quaternary structure, monomer. Homodimer. Interacts with SEMA7A. In terms of processing, N-glycosylated. As to expression, detected in heart, brain, lung, spleen and placenta.

The protein resides in the membrane. Functionally, receptor for SEMA7A, for smallpox semaphorin A39R, vaccinia virus semaphorin A39R and for herpesvirus Sema protein. Binding of semaphorins triggers cellular responses leading to the rearrangement of the cytoskeleton and to secretion of IL6 and IL8. This Homo sapiens (Human) protein is Plexin-C1 (PLXNC1).